The sequence spans 154 residues: Prefoldin subunit 5 (154 aa).

Position 2 is an N-acetylalanine (A2). K42 carries the post-translational modification N6-acetyllysine. Phosphoserine is present on S56.

It belongs to the prefoldin subunit alpha family. As to quaternary structure, heterohexamer of two PFD-alpha type and four PFD-beta type subunits.

The protein localises to the nucleus. In terms of biological role, binds specifically to cytosolic chaperonin (c-CPN) and transfers target proteins to it. Binds to nascent polypeptide chain and promotes folding in an environment in which there are many competing pathways for nonnative proteins. Represses the transcriptional activity of MYC. The protein is Prefoldin subunit 5 (Pfdn5) of Mus musculus (Mouse).